The following is a 364-amino-acid chain: Uroporphyrinogen decarboxylase (364 aa).

Residues Arg-34, Ala-36, Arg-38, Arg-47, Asp-83, Tyr-161, Ser-216, and His-336 each coordinate coproporphyrinogen I. Arg-34, Ala-36, and Arg-38 together coordinate coproporphyrinogen III. Residues Asp-83, Tyr-161, Ser-216, and His-336 each contribute to the coproporphyrinogen III site.

This sequence belongs to the uroporphyrinogen decarboxylase family. In terms of assembly, homodimer.

The protein resides in the cytoplasm. It is found in the cytosol. The catalysed reaction is uroporphyrinogen III + 4 H(+) = coproporphyrinogen III + 4 CO2. It catalyses the reaction uroporphyrinogen I + 4 H(+) = coproporphyrinogen I + 4 CO2. It participates in porphyrin-containing compound metabolism; protoporphyrin-IX biosynthesis; coproporphyrinogen-III from 5-aminolevulinate: step 4/4. Its function is as follows. Catalyzes the sequential decarboxylation of the four acetate side chains of uroporphyrinogen to form coproporphyrinogen and participates in the fifth step in the heme biosynthetic pathway. Isomer I or isomer III of uroporphyrinogen may serve as substrate, but only coproporphyrinogen III can ultimately be converted to heme. In vitro also decarboxylates pentacarboxylate porphyrinogen I. The protein is Uroporphyrinogen decarboxylase of Rattus norvegicus (Rat).